The chain runs to 43 residues: Plasma membrane ATPase proteolipid 2 (43 aa).

Positions 1-5 (MLMST) are excised as a propeptide. Residues 9-29 (GVILVFILVGLACIAIISTII) traverse the membrane as a helical segment. Residues 30–43 (YRKWQARQRGLQRF) lie on the Cytoplasmic side of the membrane.

Monomer and homodimer. Associated with the 100 kDa subunit of the plasma membrane H(+)-ATPase.

The protein localises to the cell membrane. This chain is Plasma membrane ATPase proteolipid 2 (PMP2), found in Saccharomyces cerevisiae (strain ATCC 204508 / S288c) (Baker's yeast).